Reading from the N-terminus, the 158-residue chain is Small ribosomal subunit protein uS7 (158 aa).

This sequence belongs to the universal ribosomal protein uS7 family. Part of the 30S ribosomal subunit. Contacts proteins S9 and S11.

Functionally, one of the primary rRNA binding proteins, it binds directly to 16S rRNA where it nucleates assembly of the head domain of the 30S subunit. Is located at the subunit interface close to the decoding center, probably blocks exit of the E-site tRNA. The polypeptide is Small ribosomal subunit protein uS7 (Flavobacterium johnsoniae (strain ATCC 17061 / DSM 2064 / JCM 8514 / BCRC 14874 / CCUG 350202 / NBRC 14942 / NCIMB 11054 / UW101) (Cytophaga johnsonae)).